Here is a 396-residue protein sequence, read N- to C-terminus: Tryptophan synthase beta chain (396 aa).

Residue lysine 86 is modified to N6-(pyridoxal phosphate)lysine.

Belongs to the TrpB family. Tetramer of two alpha and two beta chains. It depends on pyridoxal 5'-phosphate as a cofactor.

It carries out the reaction (1S,2R)-1-C-(indol-3-yl)glycerol 3-phosphate + L-serine = D-glyceraldehyde 3-phosphate + L-tryptophan + H2O. Its pathway is amino-acid biosynthesis; L-tryptophan biosynthesis; L-tryptophan from chorismate: step 5/5. Functionally, the beta subunit is responsible for the synthesis of L-tryptophan from indole and L-serine. The polypeptide is Tryptophan synthase beta chain (Yersinia pseudotuberculosis serotype O:1b (strain IP 31758)).